A 607-amino-acid chain; its full sequence is Threonine--tRNA ligase (607 aa).

Residues 1-143 (MRVLYIHAER…SFKPEEARVA (143 aa)) form an editing domain region. Catalytic regions lie at residues 193 to 489 (PRYL…PRLP) and 194 to 489 (RYLD…PRLP). Zn(2+) is bound by residues Cys286, His337, and His458.

It belongs to the class-II aminoacyl-tRNA synthetase family. In terms of assembly, homodimer. The cofactor is Zn(2+).

It is found in the cytoplasm. The enzyme catalyses tRNA(Thr) + L-threonine + ATP = L-threonyl-tRNA(Thr) + AMP + diphosphate + H(+). Functionally, catalyzes the attachment of threonine to tRNA(Thr) in a two-step reaction: L-threonine is first activated by ATP to form Thr-AMP and then transferred to the acceptor end of tRNA(Thr). Also edits incorrectly charged L-seryl-tRNA(Thr). In Pyrobaculum calidifontis (strain DSM 21063 / JCM 11548 / VA1), this protein is Threonine--tRNA ligase.